We begin with the raw amino-acid sequence, 83 residues long: MSKGQSLQDPYLNILRKERIPVSIFLVNGIKLQGQIESFDQFVILLRNTVSQMVYKHAISTVVPSRNVRLPVQDPNAPAEEDS.

In terms of domain architecture, Sm spans 9 to 68; the sequence is DPYLNILRKERIPVSIFLVNGIKLQGQIESFDQFVILLRNTVSQMVYKHAISTVVPSRNV.

It belongs to the Hfq family. In terms of assembly, homohexamer.

In terms of biological role, RNA chaperone that binds small regulatory RNA (sRNAs) and mRNAs to facilitate mRNA translational regulation in response to envelope stress, environmental stress and changes in metabolite concentrations. Also binds with high specificity to tRNAs. This is RNA-binding protein Hfq from Chromohalobacter salexigens (strain ATCC BAA-138 / DSM 3043 / CIP 106854 / NCIMB 13768 / 1H11).